The following is a 688-amino-acid chain: Translation initiation factor IF-2 (688 aa).

A compositionally biased stretch (basic and acidic residues) spans 50 to 62 (LLSGKEKSEKTKE). The disordered stretch occupies residues 50–95 (LLSGKEKSEKTKEEDDEIETTAKNPIKESINNKKSNKRDDKKEKVN). Over residues 72 to 82 (KNPIKESINNK) the composition is skewed to low complexity. The segment covering 86 to 95 (KRDDKKEKVN) has biased composition (basic and acidic residues). Residues 187–354 (KRSPIITVMG…MILLSSEILE (168 aa)) enclose the tr-type G domain. Residues 196-203 (GHVDHGKT) form a G1 region. 196–203 (GHVDHGKT) lines the GTP pocket. Residues 221–225 (GITQH) form a G2 region. A G3 region spans residues 242 to 245 (DTPG). GTP is bound by residues 242 to 246 (DTPGH) and 296 to 299 (NKID). The segment at 296–299 (NKID) is G4. Residues 332 to 334 (SAH) are G5.

This sequence belongs to the TRAFAC class translation factor GTPase superfamily. Classic translation factor GTPase family. IF-2 subfamily.

The protein resides in the cytoplasm. In terms of biological role, one of the essential components for the initiation of protein synthesis. Protects formylmethionyl-tRNA from spontaneous hydrolysis and promotes its binding to the 30S ribosomal subunits. Also involved in the hydrolysis of GTP during the formation of the 70S ribosomal complex. This Clostridium botulinum (strain 657 / Type Ba4) protein is Translation initiation factor IF-2.